Reading from the N-terminus, the 910-residue chain is MINSLLTRVFGSRNERQLRQLNRIVAKINALEPEIEKLSDEQLQAKTPEFKQRIADGEALDKVLPEAFAVCREAGRRVLGMRHYDVQLIGGMVLHLGKIAEMRTGEGKTLVATLPVYLNALEGKGVHVVTVNDYLARRDAAQMGKLYNWLGLSVGVVYPGMPHSDKREAYAADITYGTNNEFGFDYLRDNMALSKADRYQRGLHYAIVDEVDSILIDEARTPLIISGPADDSPELYIRVNRVVPHLVKQEAEDGEGDFWVDEKGKQVHLSEAGMEHAEQLLVEAGILNGETEGLYAAQNLTVVHHLNAALRAHAIYQRDVDYIVRDGEVVIVDEFTGRTLAGRRWSDGLHQAVEAKEGVPVQRENQTLASITFQNLFRMYKKLSGMTGTADTEAFEFQSIYGLEVVVIPTNRPTIRKDSPDQVFLNRKGKFNAVLADIEECAKRGQPVLVGTTSIETSEMLSEHLSKAGVKHEVLNAKQHDREATIVANAGRPGAVTIATNMAGRGTDIVLGGSLEAELHALGEDATDEQKAAVKADWQKRHEAVKAAGGLHIVGTERHESRRIDNQLRGRSGRQGDPGSSRFYLALEDNLLRVFGGERVQKMMRMMGMKEEDVIEDRLVTRMIEKSQRKVEAHNFDIRKNLLDFDDVNNDQRKVIYAQRDELLDAESVKDNVDGIRDDVIFDVVARFVPPNSIDEQWDLRGLEATLESDFGLQMSLTDLVKEHEELDAEAIAAKVQERVNQHFAEKEASVGEETMRALEKHVMLTVLDQSWKEHLARMDYLRQGIYLRGYAQKQPKQEYKKEAFELFSDMLENVKREVVTLLSRVRIRSDEEVQALEAAERQQAEARLSQSQFQHQDVGGYSADEEAAQVQAAQQGVAQMQRDEPKIGRNDPCPCGSGKKYKHCHGQLS.

ATP-binding positions include glutamine 87, 105–109 (GEGKT), and aspartate 508. Positions 848 to 910 (RLSQSQFQHQ…KYKHCHGQLS (63 aa)) are disordered. A compositionally biased stretch (low complexity) spans 869-880 (AQVQAAQQGVAQ). Zn(2+) is bound by residues cysteine 894, cysteine 896, cysteine 905, and histidine 906. Basic residues predominate over residues 900-910 (KKYKHCHGQLS).

This sequence belongs to the SecA family. In terms of assembly, monomer and homodimer. Part of the essential Sec protein translocation apparatus which comprises SecA, SecYEG and auxiliary proteins SecDF-YajC and YidC. Zn(2+) is required as a cofactor.

Its subcellular location is the cell inner membrane. It is found in the cytoplasm. It catalyses the reaction ATP + H2O + cellular proteinSide 1 = ADP + phosphate + cellular proteinSide 2.. Functionally, part of the Sec protein translocase complex. Interacts with the SecYEG preprotein conducting channel. Has a central role in coupling the hydrolysis of ATP to the transfer of proteins into and across the cell membrane, serving both as a receptor for the preprotein-SecB complex and as an ATP-driven molecular motor driving the stepwise translocation of polypeptide chains across the membrane. This chain is Protein translocase subunit SecA, found in Stenotrophomonas maltophilia (strain K279a).